Consider the following 187-residue polypeptide: UPF0340 protein stu1894 (187 aa).

This sequence belongs to the UPF0340 family.

In Streptococcus thermophilus (strain ATCC BAA-250 / LMG 18311), this protein is UPF0340 protein stu1894.